Here is an 889-residue protein sequence, read N- to C-terminus: Alanine--tRNA ligase (889 aa).

4 residues coordinate Zn(2+): H566, H570, C683, and H687.

The protein belongs to the class-II aminoacyl-tRNA synthetase family. It depends on Zn(2+) as a cofactor.

The protein resides in the cytoplasm. The enzyme catalyses tRNA(Ala) + L-alanine + ATP = L-alanyl-tRNA(Ala) + AMP + diphosphate. Functionally, catalyzes the attachment of alanine to tRNA(Ala) in a two-step reaction: alanine is first activated by ATP to form Ala-AMP and then transferred to the acceptor end of tRNA(Ala). Also edits incorrectly charged Ser-tRNA(Ala) and Gly-tRNA(Ala) via its editing domain. The chain is Alanine--tRNA ligase from Herpetosiphon aurantiacus (strain ATCC 23779 / DSM 785 / 114-95).